The following is a 257-amino-acid chain: BTB/POZ domain-containing protein KCTD1 (257 aa).

The segment at 1-25 is disordered; it reads MSRPLITRSPASPLNNQGIPTPAQL. S9 and S12 each carry phosphoserine. Polar residues predominate over residues 9–25; sequence SPASPLNNQGIPTPAQL. A BTB domain is found at 30-100; sequence APVHIDVGGH…LRTSKLLIPD (71 aa).

In terms of assembly, forms homopentamers. Interacts with KCTD15, probably forming heteropentamers depending on its abundance in a cell-type dependent manner. Interacts with TFAP2A, TFAP2B and TFAP2C via the BTB domain. Sumoylated.

It is found in the nucleus. Functionally, may repress the transcriptional activity of AP-2 family members, including TFAP2A, TFAP2B and TFAP2C to various extent. The sequence is that of BTB/POZ domain-containing protein KCTD1 (KCTD1) from Bos taurus (Bovine).